Consider the following 62-residue polypeptide: MQKLFIVLLLFCILRLDAEVDGRRATFCKQPGCQEACKKENKNGRCVDKFDNNFSYNICRCY.

A signal peptide spans 1–18 (MQKLFIVLLLFCILRLDA). 3 cysteine pairs are disulfide-bonded: Cys28/Cys46, Cys33/Cys59, and Cys37/Cys61.

This sequence belongs to the short scorpion toxin superfamily. Potassium channel inhibitor family. Alpha-KTx 23 subfamily. Expressed by the venom gland.

The protein resides in the secreted. May block potassium channels. In Buthus israelis (Israeli scorpion), this protein is Potassium channel toxin alpha-KTx Tx773.